Reading from the N-terminus, the 109-residue chain is Flagellar hook-basal body complex protein FliE (109 aa).

Residues 1–38 (MQAIHNDKSLLSPFSELNTDNRTQREESGSTFKEQKGG) form a disordered region. Residues 22 to 38 (RTQREESGSTFKEQKGG) show a composition bias toward basic and acidic residues.

Belongs to the FliE family.

It localises to the bacterial flagellum basal body. The sequence is that of Flagellar hook-basal body complex protein FliE from Helicobacter acinonychis (strain Sheeba).